A 129-amino-acid chain; its full sequence is Small ribosomal subunit protein uS8 (129 aa).

It belongs to the universal ribosomal protein uS8 family. As to quaternary structure, part of the 30S ribosomal subunit.

Its function is as follows. One of the primary rRNA binding proteins, it binds directly to 16S rRNA central domain where it helps coordinate assembly of the platform of the 30S subunit. This is Small ribosomal subunit protein uS8 from Methanothrix thermoacetophila (strain DSM 6194 / JCM 14653 / NBRC 101360 / PT) (Methanosaeta thermophila).